The following is a 506-amino-acid chain: MVLTLLLIICLALEVRSENEEGRLIEKLLGDYDKRIIPAKTLDHIIDVTLKLTLTNLISLNEKEEALTTNVWIEIQWNDYRLSWNTSEYEGIDLVRIPSELLWLPDVVLENNVDGQFEVAYYANVLVYNDGSMYWLPPAIYRSTCPIAVTYFPFDWQNCSLVFRSQTYNAHEVNLQLSAEEGEAVEWIHIDPEDFTENGEWTIRHRPAKKNYNWQLTKDDTDFQEIIFFLIIQRKPLFYIINIIAPCVLISSLVVLVYFLPAQAGGQKCTLSISVLLAQTIFLFLIAQKVPETSLNVPLIGKYLIFVMFVSMLIVMNCVIVLNVSLRTPNTHSLSEKIKHLFLGFLPKYLGMQLEPSEETPEKPQPRRRSSFGIMIKAEEYILKKPRSELMFEEQKDRHGLKRVNKMTSDIDIGTTVDLYKDLANFAPEIKSCVEACNFIAKSTKEQNDSGSENENWVLIGKVIDKACFWIALLLFSIGTLAIFLTGHFNQVPEFPFPGDPRKYVP.

The signal sequence occupies residues 1–17 (MVLTLLLIICLALEVRS). The Extracellular portion of the chain corresponds to 18 to 235 (ENEEGRLIEK…IIFFLIIQRK (218 aa)). A glycan (N-linked (GlcNAc...) asparagine) is linked at Asn-85. An intrachain disulfide couples Cys-145 to Cys-159. The next 3 membrane-spanning stretches (helical) occupy residues 236 to 260 (PLFYIINIIAPCVLISSLVVLVYFL), 269 to 287 (CTLSISVLLAQTIFLFLIA), and 303 to 324 (YLIFVMFVSMLIVMNCVIVLNV). Residues 325–466 (SLRTPNTHSL…WVLIGKVIDK (142 aa)) are Cytoplasmic-facing. Position 381 is a phosphotyrosine; by Tyr-kinases (Tyr-381). Residues 467–490 (ACFWIALLLFSIGTLAIFLTGHFN) form a helical membrane-spanning segment.

It belongs to the ligand-gated ion channel (TC 1.A.9) family. Acetylcholine receptor (TC 1.A.9.1) subfamily. Gamma/CHRNG sub-subfamily. In terms of assembly, pentamer of two alpha chains, and one each of the beta, delta, and gamma chains. In terms of processing, seems not to be glycosylated on Asn-158.

It localises to the postsynaptic cell membrane. It is found in the cell membrane. It catalyses the reaction K(+)(in) = K(+)(out). It carries out the reaction Na(+)(in) = Na(+)(out). After binding acetylcholine, the AChR responds by an extensive change in conformation that affects all subunits and leads to opening of an ion-conducting channel across the plasma membrane. This chain is Acetylcholine receptor subunit gamma (CHRNG), found in Tetronarce californica (Pacific electric ray).